Consider the following 757-residue polypeptide: Chloride anion exchanger (757 aa).

Residues 1-71 (MIEAIGNQYV…SWLPAYKIKE (71 aa)) are Cytoplasmic-facing. A helical transmembrane segment spans residues 72 to 92 (WLLSDIVSGISTGLVAVLQGL). Residue A93 is a topological domain, extracellular. A helical membrane pass occupies residues 94–114 (FALLVNIPPAYGLYAAFFPVI). Residues 115-124 (TYFFLGTSRH) lie on the Cytoplasmic side of the membrane. The helical transmembrane segment at 125–145 (ISVGPFPVLSMMVGVVVTRVV) threads the bilayer. Topologically, residues 146–176 (SDPNASSELSSSSTENDSFIEEKVMVAASVT) are extracellular. Residues N149 and N161 are each glycosylated (N-linked (GlcNAc...) asparagine). A helical transmembrane segment spans residues 177–197 (VLSGIIQLLLGVLQVGFVVIY). The Cytoplasmic segment spans residues 198–201 (LSES). Residues 202–222 (LISGFTTAAAIHVLVSQLKFM) traverse the membrane as a helical segment. Over 223-250 (LQLPVPAYSDPFSIFKVLESVFTQIQKT) the chain is Extracellular. The chain crosses the membrane as a helical span at residues 251–271 (NIADLVTSVIILVVVFVFKEI). Residues 272-278 (NQRYRSK) are Cytoplasmic-facing. Residues 279–299 (LPVPIPIELIMTVIATGVSYG) form a helical membrane-spanning segment. Over 300–335 (CNFEDRFGVAVVGNMSLGFQPPITPSVEVFQDTIGD) the chain is Extracellular. A helical transmembrane segment spans residues 336-356 (SFGIAIVGFAVAFSVASVYSL). Residues 357–367 (KYDYPIDGNQE) lie on the Cytoplasmic side of the membrane. A helical transmembrane segment spans residues 368–388 (LIALGVSNIFTGAFKGFAGST). The Extracellular segment spans residues 389 to 404 (ALSRSGVQESTGGKTQ). The chain crosses the membrane as a helical span at residues 405-425 (VAGLLSAVIVLIVIVAIGFLL). The Cytoplasmic segment spans residues 426 to 462 (QPLQKSVLAALALGNLKGMLMQFAEIGRLWKKDKYDC). The helical transmembrane segment at 463–483 (LIWIMTFIFAIVLGLGLGLAA) threads the bilayer. At 484 to 757 (SVAFQLLTIV…ECQVPVETKF (274 aa)) the chain is on the extracellular side. The region spanning 518–713 (NYAEVYEPEG…LTIHDAILHI (196 aa)) is the STAS domain. A PDZ-binding motif is present at residues 754 to 757 (ETKF).

It belongs to the SLC26A/SulP transporter (TC 2.A.53) family. Interacts with PDZK1. Interacts with CFTR, SLC26A6 and NHERF1. Interacts (via PDZ-binding motif) with NHERF4 (via the third PDZ domain). This interaction leads to decreased expression of SLC26A3 on the cell membrane resulting in its reduced exchanger activity. Post-translationally, N-glycosylation is required for efficient cell surface expression, and protection from proteolytic degradation. As to expression, expressed in spermatogenic cells. Expressed at high levels in cecum and colon and at lower levels in small intestine.

It is found in the apical cell membrane. The protein localises to the membrane. Its subcellular location is the cell membrane. It catalyses the reaction hydrogencarbonate(in) + 2 chloride(out) = hydrogencarbonate(out) + 2 chloride(in). Functionally, mediates chloride-bicarbonate exchange with a chloride bicarbonate stoichiometry of 2:1 in the intestinal epithelia. Plays a role in the chloride and bicarbonate homeostasis during sperm epididymal maturation and capacitation. The sequence is that of Chloride anion exchanger (Slc26a3) from Mus musculus (Mouse).